The sequence spans 379 residues: MNTLSNTITVAVVGGEGIGPEVTDQSHRILKWFSDRRGAPVILREAQYGLIPYLATGKVLPDDTVEAMEEADAILWGATGGPETTEVPPAARKAGSLLSLRSKYDLYANLRPIVANPALADSAPLKAAVLKDVDFIIIRELTSGIYFGEPRGIETLPDGQRRGFNTQQYTTSQIRRVARTAFELARTRKGRVCSVDKANVLETSVLWREEVTALHEAEFSDVELTHLYVDNAAMQIVRAPSQFDVMVTCNIFGDILSDCAAMASGSLGMLPSVSLGPPDRLGRRKALYEPVHGSAPDIAGKGIANPLGSILSVAMMLRITLHRPEDAALLEKAVDTALAAGARTADIAEPGAKRLSTQEMGDAVLNALDKVVGKEREHA.

Residues R101, R111, R139, and D230 each contribute to the substrate site. Mg(2+) contacts are provided by D230, D254, and D258. 293–305 (GSAPDIAGKGIAN) contributes to the NAD(+) binding site.

Belongs to the isocitrate and isopropylmalate dehydrogenases family. LeuB type 1 subfamily. In terms of assembly, homodimer. The cofactor is Mg(2+). Requires Mn(2+) as cofactor.

It is found in the cytoplasm. It carries out the reaction (2R,3S)-3-isopropylmalate + NAD(+) = 4-methyl-2-oxopentanoate + CO2 + NADH. The protein operates within amino-acid biosynthesis; L-leucine biosynthesis; L-leucine from 3-methyl-2-oxobutanoate: step 3/4. In terms of biological role, catalyzes the oxidation of 3-carboxy-2-hydroxy-4-methylpentanoate (3-isopropylmalate) to 3-carboxy-4-methyl-2-oxopentanoate. The product decarboxylates to 4-methyl-2 oxopentanoate. The sequence is that of 3-isopropylmalate dehydrogenase 1 from Bradyrhizobium diazoefficiens (strain JCM 10833 / BCRC 13528 / IAM 13628 / NBRC 14792 / USDA 110).